The following is a 122-amino-acid chain: Allatotropin (122 aa).

An N-terminal signal peptide occupies residues 1–23 (MRVILAITLLFVAGSFIATASKG). Residues 24 to 40 (RNYPRFFKHRMKLREIR) constitute a propeptide that is removed on maturation. Phenylalanine 53 bears the Phenylalanine amide mark. Residues 57-122 (ESPAERIPDL…GDDSKKGTIA (66 aa)) constitute a propeptide that is removed on maturation.

As to expression, expressed in brain and ventral ganglia but not in the retrocerebral complex (at protein level).

Its subcellular location is the secreted. Neuropeptide stimulator of juvenile hormone synthesis. In Camponotus floridanus (Florida carpenter ant), this protein is Allatotropin.